The sequence spans 116 residues: MAGRSGDSDENLLKAIRLIKFLYQSNPPPSPEGTRQARRNRRRRWRARQRQIHSIGERIICTFLGRPEEPVPLQLPPLERLNLNCSEDCGTSGTQGVGSPQIPVEPPAVLESGTEE.

Serine 5 and serine 8 each carry phosphoserine; by host CK2. Residues 18–26 are homomultimerization; the sequence is LIKFLYQSN. Positions 23–48 are disordered; the sequence is YQSNPPPSPEGTRQARRNRRRRWRAR. The Nuclear localization signal and RNA-binding (RRE) signature appears at 34–50; the sequence is TRQARRNRRRRWRARQR. Residues 36–48 are compositionally biased toward basic residues; it reads QARRNRRRRWRAR. Positions 73-84 match the Nuclear export signal and binding to XPO1 motif; it reads LQLPPLERLNLN. The interval 90–116 is disordered; the sequence is GTSGTQGVGSPQIPVEPPAVLESGTEE. Phosphoserine; by host is present on residues serine 92 and serine 99.

Belongs to the HIV-1 REV protein family. As to quaternary structure, homomultimer; when bound to the RRE. Multimeric assembly is essential for activity and may involve XPO1. Binds to human KPNB1, XPO1, TNPO1, RANBP5 and IPO7. Interacts with the viral Integrase. Interacts with human KHDRBS1. Interacts with human NAP1; this interaction decreases Rev multimerization and stimulates its activity. Interacts with human DEAD-box helicases DDX3 and DDX24; these interactions may serve for viral RNA export to the cytoplasm and packaging, respectively. Interacts with human PSIP1; this interaction may inhibit HIV-1 DNA integration by promoting dissociation of the Integrase-LEDGF/p75 complex. Asymmetrically arginine dimethylated at one site by host PRMT6. Methylation impairs the RNA-binding activity and export of viral RNA from the nucleus to the cytoplasm. In terms of processing, phosphorylated by protein kinase CK2. Presence of, and maybe binding to the N-terminus of the regulatory beta subunit of CK2 is necessary for CK2-mediated Rev's phosphorylation.

The protein resides in the host nucleus. It localises to the host nucleolus. Its subcellular location is the host cytoplasm. In terms of biological role, escorts unspliced or incompletely spliced viral pre-mRNAs (late transcripts) out of the nucleus of infected cells. These pre-mRNAs carry a recognition sequence called Rev responsive element (RRE) located in the env gene, that is not present in fully spliced viral mRNAs (early transcripts). This function is essential since most viral proteins are translated from unspliced or partially spliced pre-mRNAs which cannot exit the nucleus by the pathway used by fully processed cellular mRNAs. Rev itself is translated from a fully spliced mRNA that readily exits the nucleus. Rev's nuclear localization signal (NLS) binds directly to KPNB1/Importin beta-1 without previous binding to KPNA1/Importin alpha-1. KPNB1 binds to the GDP bound form of RAN (Ran-GDP) and targets Rev to the nucleus. In the nucleus, the conversion from Ran-GDP to Ran-GTP dissociates Rev from KPNB1 and allows Rev's binding to the RRE in viral pre-mRNAs. Rev multimerization on the RRE via cooperative assembly exposes its nuclear export signal (NES) to the surface. Rev can then form a complex with XPO1/CRM1 and Ran-GTP, leading to nuclear export of the complex. Conversion from Ran-GTP to Ran-GDP mediates dissociation of the Rev/RRE/XPO1/RAN complex, so that Rev can return to the nucleus for a subsequent round of export. Beside KPNB1, also seems to interact with TNPO1/Transportin-1, RANBP5/IPO5 and IPO7/RANBP7 for nuclear import. The nucleoporin-like HRB/RIP is an essential cofactor that probably indirectly interacts with Rev to release HIV RNAs from the perinuclear region to the cytoplasm. The sequence is that of Protein Rev from Homo sapiens (Human).